A 366-amino-acid chain; its full sequence is Erythronate-4-phosphate dehydrogenase (366 aa).

2 residues coordinate substrate: S46 and T67. D147 and T175 together coordinate NAD(+). R208 is a catalytic residue. Position 228 (D228) interacts with NAD(+). The active site involves E233. H250 functions as the Proton donor in the catalytic mechanism. NAD(+) is bound at residue G253. A substrate-binding site is contributed by Y254.

Belongs to the D-isomer specific 2-hydroxyacid dehydrogenase family. PdxB subfamily. In terms of assembly, homodimer.

It is found in the cytoplasm. It catalyses the reaction 4-phospho-D-erythronate + NAD(+) = (R)-3-hydroxy-2-oxo-4-phosphooxybutanoate + NADH + H(+). It participates in cofactor biosynthesis; pyridoxine 5'-phosphate biosynthesis; pyridoxine 5'-phosphate from D-erythrose 4-phosphate: step 2/5. Functionally, catalyzes the oxidation of erythronate-4-phosphate to 3-hydroxy-2-oxo-4-phosphonooxybutanoate. The polypeptide is Erythronate-4-phosphate dehydrogenase (Coxiella burnetii (strain RSA 331 / Henzerling II)).